A 63-amino-acid polypeptide reads, in one-letter code: Potassium channel toxin MeuTXKalpha4 (63 aa).

An N-terminal signal peptide occupies residues 1 to 28 (MSRLLIFILTAVVLSVIIDILNNSKVEG). Cystine bridges form between cysteine 35–cysteine 53, cysteine 39–cysteine 59, and cysteine 43–cysteine 61.

This sequence belongs to the short scorpion toxin superfamily. Potassium channel inhibitor family. Expressed by the venom gland.

The protein localises to the secreted. In terms of biological role, may block voltage-gated potassium channels (Kv). The chain is Potassium channel toxin MeuTXKalpha4 from Mesobuthus eupeus (Lesser Asian scorpion).